Consider the following 256-residue polypeptide: Tyrosine-protein kinase-interacting protein (256 aa).

Positions 1–14 (MANEGEEIELTEFP) are enriched in acidic residues. The tract at residues 1-49 (MANEGEEIELTEFPETEKERKDEEKLSSCSEETTNTSSSSGSDHVPVPI) is disordered. Topologically, residues 1–228 (MANEGEEIEL…DLKRLENKIN (228 aa)) are cytoplasmic. The segment covering 15-26 (ETEKERKDEEKL) has biased composition (basic and acidic residues). Low complexity predominate over residues 27 to 42 (SSCSEETTNTSSSSGS). The residue at position 114 (Y114) is a Phosphotyrosine; by host LCK. Position 127 is a phosphotyrosine; by host (Y127). The tract at residues 146–155 (EDLQSFLEKY) is CSKH/LBD2. The segment at 162-183 (PKRDLSATWDPGMPTPPLPPRP) is disordered. The interval 174–183 (MPTPPLPPRP) is SH3B/LBD1. The span at 174-183 (MPTPPLPPRP) shows a compositional bias: pro residues. Residues 229-249 (VIICLVVVILAVLLLVTVLSI) traverse the membrane as a helical segment. At 250–256 (LHIGMKS) the chain is on the extracellular side.

As to quaternary structure, binds host LCK, human WDR48 and human NXF1/TAP. Forms a complex with activated LCK and STAT1 and STAT3. Post-translationally, phosphorylation on Tyr-114 acts as a docking site for the recruitment of STATs 1 and 3.

It is found in the host cell membrane. Plays a critical role in virus induced T-cell transformation. Binds to T-cell-specific tyrosine kinase LCK SH2 and SH3 domains, thereby activating its kinase activity. Once phosphorylated by host LCK, forms a complex with at least STAT 1 and 3, resulting on the phosphorylation of STAT3 and presumably STAT1, and their migration into the nucleus to induce transcription of target genes. Stimulates host ILF3/NF-AT-90 activity. Association with host NXF1/TAP transduces the signal up-regulating surface expression of adhesion molecules as well as activating NF-kappa-B activity. Acts synergistically with StpC to stimulate NF-kappa-B activity and interleukin-2 gene expression. Activation of NF-kappa-B protects lymphocytes from apoptosis, thereby facilitating viral induced cell transformation. May cause down-regulation of host LCK and cell apoptosis when stably overexpressed ex vivo. Interaction with WDR48 induce degradation of T-cell receptor in a lysosome-dependent fashion, when both proteins are overexpressed. The biological effect of this interaction remains controversial since no T-cell receptor degradation is observed in infected cells. The polypeptide is Tyrosine-protein kinase-interacting protein (Saimiri sciureus (Common squirrel monkey)).